Consider the following 533-residue polypeptide: Calcineurin-interacting protein 3 (533 aa).

3 disordered regions span residues 1-30 (MRSL…NMDI), 53-85 (PRKQ…YTKR), and 359-404 (MDMS…LTLP). Residues 61–85 (KRAEPVSEEHRKKESSKNSREYTKR) are compositionally biased toward basic and acidic residues. The segment covering 359-372 (MDMSQTLSPEQTLS) has biased composition (polar residues). The segment covering 373–384 (PREKLQVQDRKI) has biased composition (basic and acidic residues).

Its subcellular location is the nucleus. The chain is Calcineurin-interacting protein 3 from Caenorhabditis elegans.